Here is a 99-residue protein sequence, read N- to C-terminus: Large ribosomal subunit protein bL21 (99 aa).

Belongs to the bacterial ribosomal protein bL21 family. Part of the 50S ribosomal subunit. Contacts protein L20.

Its function is as follows. This protein binds to 23S rRNA in the presence of protein L20. The chain is Large ribosomal subunit protein bL21 from Mesomycoplasma hyopneumoniae (strain 7448) (Mycoplasma hyopneumoniae).